A 128-amino-acid chain; its full sequence is Disintegrin EO4A (128 aa).

The N-terminal stretch at 1–20 (MIPVLLVTICLAVFPFQGSS) is a signal peptide. A propeptide spanning residues 21 to 47 (IILESGNINDYEIVYPKKVNVLPTGAM) is cleaved from the precursor. One can recognise a Disintegrin domain in the interval 26–112 (GNINDYEIVY…DCPRNPYKGK (87 aa)). Intrachain disulfides connect C53-C76, C67-C73, C72-C97, and C85-C104. Positions 89–91 (RGD) match the Cell attachment site motif. A propeptide spanning residues 115–128 (PMKWPAAAKGSVLM) is cleaved from the precursor.

It belongs to the disintegrin family. Dimeric disintegrin subfamily. In terms of assembly, heterodimer with EO5B; disulfide-linked. In terms of tissue distribution, expressed by the venom gland.

The protein localises to the secreted. Its function is as follows. Poor inhibitor of platelet aggregation. The disintegrin inhibits the adhesion of cells expressing the RGD-dependent integrin alpha-5/beta-1 (ITGA5/ITGB1) to immobilized fibronectin. Inhibition on alpha-2b/beta-3 (ITGA2B/ITGB3) is low. This is Disintegrin EO4A from Echis ocellatus (Ocellated saw-scaled viper).